The chain runs to 359 residues: Replication-associated protein (359 aa).

Positions 18–121 (RHRNANTFLT…PKDKWEKGTY (104 aa)) constitute a CRESS-DNA virus Rep endonuclease domain. Residues 25–28 (FLTY) carry the RCR-1 motif. A divalent metal cation is bound by residues E59, H67, and H69. Positions 67-69 (HCH) match the RCR-2 motif. Y107 (for DNA cleavage activity) is an active-site residue. An RCR-3 motif is present at residues 107–110 (YILK). D111 provides a ligand contact to a divalent metal cation. The segment at 181-193 (SASRLFPDIAEPY) is oligomerization. 235-242 (GPTRTGKT) is a binding site for ATP. Residues 258–276 (IDWSSYDEEAQYNVVDDIP) are transactivation. Residues 298–309 (KYGKRRKVASKS) carry the Nuclear localization signal motif.

The protein belongs to the geminiviridae Rep protein family. As to quaternary structure, homooligomer. Rep binds to repeated DNA motifs (iterons). Forms the O-complex, which is a Rep-DNA complex involved in the initiation of RCR. Part of the C- and V-complexes which are RepA-Rep-DNA complexes involved in the c-sense and v-sense transcription. Requires Mg(2+) as cofactor. The cofactor is Mn(2+).

The protein resides in the host nucleus. Its function is as follows. Essential for the replication of viral ssDNA. The closed circular ssDNA genome is first converted to a superhelical dsDNA. Rep binds a specific region at the genome origin of replication. It introduces an endonucleolytic nick within the conserved sequence 5'-TAATATTAC-3' in the intergenic region of the genome present in all geminiviruses, thereby initiating the rolling circle replication (RCR). Following cleavage, binds covalently to the 5'-phosphate of DNA as a tyrosyl ester. The cleavage gives rise to a free 3'-OH that serves as a primer for the cellular DNA polymerase. The polymerase synthesizes the (+) strand DNA by rolling circle mechanism. After one round of replication, a Rep-catalyzed nucleotidyl transfer reaction releases a circular single-stranded virus genome, thereby terminating the replication. Displays origin-specific DNA cleavage, nucleotidyl transferase, ATPase and helicase activities. Acts as an inhibitor of C-sense gene transcription. This Megathyrsus maximus (PanSV) protein is Replication-associated protein.